The sequence spans 294 residues: RAB7A-interacting MON1-CCZ1 complex subunit 1 (294 aa).

The residue at position 2 (Ala-2) is an N-acetylalanine.

It belongs to the RIMOC1 family. As to quaternary structure, interacts with the MON1A-CCZ1B complex. Interacts with GDP-bound RAB7A and promotes its interaction with the MON1A-CCZ1B complex.

It localises to the cytoplasm. It is found in the cytosol. Plays an important role in the removal of damaged mitochondria via mitophagy by controlling the stability and localization of RAB7A. Required for the recruitment of RAB7A and ATG9A vesicles to damaged mitochondria and promotes the stability of RAB7A by inhibiting its proteasomal degradation during mitophagy. The sequence is that of RAB7A-interacting MON1-CCZ1 complex subunit 1 from Homo sapiens (Human).